The following is an 801-amino-acid chain: MIVTYNWLKEFVECDLSTQELGDLLTMLGLEVEGVREVGGGLDQVVVAVVEERRKHPNADKLSLCKVNNGREILDIVCGAQNFTAGDKVALAQIGAVLPGDFKIKRSKIRGEESCGMLCSERELGLSAESEGIMILPSDLPLGVPLFDALGLKDTIFEIGLTPNRADCLSVIGVAREIAAKLGKRITYPGHAVVESGEPVTQKATVIVEDPELCPRYTARFISGCSIGPSPAWLVRRLEAVGMRSINNVVDVTNYVLMEYGHPLHAFDADLLENSTIVVRRATDGEVFTTLDGQQRTLTAGDLTIRDGARSVALAGIMGGENSEIRDTTTNILLESAYFNPSAIRRTAKRLGLHTESSHRFERGADVAIVTRALDRAAALLAELAGGTVAAGIIDVYPTPVSHRTIRFRVDRCNALLGVELSANEMKALFHHLEFTTVTVEPGIIDVTVPTFRVDLEREIDLVEEVARLNGYDRIETTMPRARVFSDRPTKHQRMERRCRDLMVGQGFNEVITFSFMAPGALDRMMLGPEDGRRSVVALRNPLVDEQAVMRTTLLPGLLEAASRNLNYRSLDLRLFELRRVYLRVEGEQLPNEPLVLAGLMTGRRYPEGWNQEKHPLDFYDVKGVVEAVLDAFSVSGASYSSDDTDVFYHPGKSCTVKCGDLILGSLGELHPDVQDNFGIDQPVFYFELNFERLLSAARAASAVVPPSRFPDTFRDIAILVADETPAADIVRCIDGLRIREIESAAVFDLYKGVHVPEGKKSIAVRVRYRSTEKTLSDDEVSPLHQKVVDSLVAKLGATIR.

The tRNA-binding domain occupies 39-147 (GGGLDQVVVA…SDLPLGVPLF (109 aa)). A B5 domain is found at 401–477 (VSHRTIRFRV…RLNGYDRIET (77 aa)). Residues aspartate 455, aspartate 461, glutamate 464, and glutamate 465 each coordinate Mg(2+). Residues 708-801 (SRFPDTFRDI…LVAKLGATIR (94 aa)) enclose the FDX-ACB domain.

Belongs to the phenylalanyl-tRNA synthetase beta subunit family. Type 1 subfamily. In terms of assembly, tetramer of two alpha and two beta subunits. Mg(2+) is required as a cofactor.

It localises to the cytoplasm. It catalyses the reaction tRNA(Phe) + L-phenylalanine + ATP = L-phenylalanyl-tRNA(Phe) + AMP + diphosphate + H(+). The polypeptide is Phenylalanine--tRNA ligase beta subunit (Geobacter sulfurreducens (strain ATCC 51573 / DSM 12127 / PCA)).